Here is a 289-residue protein sequence, read N- to C-terminus: Oxygen-dependent coproporphyrinogen-III oxidase (289 aa).

Ser82 serves as a coordination point for substrate. A divalent metal cation contacts are provided by His86 and His96. Catalysis depends on His96, which acts as the Proton donor. 98–100 (NYR) serves as a coordination point for substrate. A divalent metal cation-binding residues include His130 and His160. An important for dimerization region spans residues 224–259 (YVEFNLVWDRGTIFGLQTNGRIESILMSMPPLVRWE).

It belongs to the aerobic coproporphyrinogen-III oxidase family. As to quaternary structure, homodimer. A divalent metal cation serves as cofactor.

It is found in the cytoplasm. The enzyme catalyses coproporphyrinogen III + O2 + 2 H(+) = protoporphyrinogen IX + 2 CO2 + 2 H2O. It functions in the pathway porphyrin-containing compound metabolism; protoporphyrin-IX biosynthesis; protoporphyrinogen-IX from coproporphyrinogen-III (O2 route): step 1/1. Functionally, involved in the heme and chlorophyll biosynthesis. Catalyzes the aerobic oxidative decarboxylation of propionate groups of rings A and B of coproporphyrinogen-III to yield the vinyl groups in protoporphyrinogen-IX. This is Oxygen-dependent coproporphyrinogen-III oxidase from Gloeobacter violaceus (strain ATCC 29082 / PCC 7421).